The following is a 101-amino-acid chain: Putative pterin-4-alpha-carbinolamine dehydratase (101 aa).

This sequence belongs to the pterin-4-alpha-carbinolamine dehydratase family.

The enzyme catalyses (4aS,6R)-4a-hydroxy-L-erythro-5,6,7,8-tetrahydrobiopterin = (6R)-L-erythro-6,7-dihydrobiopterin + H2O. The polypeptide is Putative pterin-4-alpha-carbinolamine dehydratase (Streptomyces coelicolor (strain ATCC BAA-471 / A3(2) / M145)).